A 327-amino-acid chain; its full sequence is uncharacterized protein (327 aa).

Residues 1–23 (MGGGRLPPLWLPLLIAWSEWGNC) form the signal peptide. N144 and N239 each carry an N-linked (GlcNAc...) asparagine; by host glycan. Residues 298 to 327 (EESEAAEETAAGEASAVAAAAVSEEEQRRE) form a disordered region. Residues 305–319 (ETAAGEASAVAAAAV) are compositionally biased toward low complexity.

This is an uncharacterized protein from Human cytomegalovirus (strain AD169) (HHV-5).